Here is a 107-residue protein sequence, read N- to C-terminus: U1-lycotoxin-Ls1b (107 aa).

Residues 1 to 20 (MMKVLVVVALLPTLISYSSS) form the signal peptide. The propeptide occupies 21 to 41 (EGIDDLEADELLSLMANEQTR). 4 disulfides stabilise this stretch: C44-C59, C51-C68, C58-C86, and C70-C84.

This sequence belongs to the neurotoxin 19 (CSTX) family. 04 (U1-Lctx) subfamily. As to expression, expressed by the venom gland.

It is found in the secreted. This Lycosa singoriensis (Wolf spider) protein is U1-lycotoxin-Ls1b.